The following is a 98-amino-acid chain: NADH-ubiquinone oxidoreductase chain 4L (98 aa).

Helical transmembrane passes span 1–21 (MPVVYVNIFLAFIVSLVGLLI), 29–49 (SLLCLEGMMLSLFVMLTVTVL), and 61–81 (IILLVFAACEAALGLSLLVMV).

Belongs to the complex I subunit 4L family. Core subunit of respiratory chain NADH dehydrogenase (Complex I) which is composed of 45 different subunits.

It localises to the mitochondrion inner membrane. The catalysed reaction is a ubiquinone + NADH + 5 H(+)(in) = a ubiquinol + NAD(+) + 4 H(+)(out). Core subunit of the mitochondrial membrane respiratory chain NADH dehydrogenase (Complex I) which catalyzes electron transfer from NADH through the respiratory chain, using ubiquinone as an electron acceptor. Part of the enzyme membrane arm which is embedded in the lipid bilayer and involved in proton translocation. The protein is NADH-ubiquinone oxidoreductase chain 4L (MT-ND4L) of Ursus maritimus (Polar bear).